The primary structure comprises 394 residues: p-hydroxybenzoate hydroxylase (394 aa).

FAD is bound by residues Ser-13, Glu-32, Arg-42–Val-47, and Gln-102. Substrate contacts are provided by residues Tyr-201, Ser-212–Arg-214, and Tyr-222. Asp-286 contributes to the FAD binding site. Residue Pro-293 coordinates substrate. Leu-299–Asn-300 contacts FAD.

It belongs to the aromatic-ring hydroxylase family. In terms of assembly, homodimer. It depends on FAD as a cofactor.

It carries out the reaction 4-hydroxybenzoate + NADPH + O2 + H(+) = 3,4-dihydroxybenzoate + NADP(+) + H2O. It participates in aromatic compound metabolism; benzoate degradation via hydroxylation; 3,4-dihydroxybenzoate from benzoate: step 2/2. In terms of biological role, catalyzes the incorporation of an atom of dioxygen into p-hydroxybenzoate (p-OHB) to form 3,4-dihydroxybenzoate (3,4DOHB). The reaction occurs in two parts: reduction of the flavin adenine dinucleotide (FAD) in the enzyme by reduced nicotinamide adenine dinucleotide phosphate (NADPH) in response to binding p-hydroxybenzoate to the enzyme and oxidation of reduced FAD with oxygen to form a hydroperoxide, which then oxygenates p-hydroxybenzoate. This chain is p-hydroxybenzoate hydroxylase, found in Pseudomonas aeruginosa (strain ATCC 15692 / DSM 22644 / CIP 104116 / JCM 14847 / LMG 12228 / 1C / PRS 101 / PAO1).